A 204-amino-acid polypeptide reads, in one-letter code: Molybdenum cofactor guanylyltransferase (204 aa).

GTP-binding positions include 12–14 (LAG), Lys-25, Asn-53, Asp-71, and Asp-101. Asp-101 serves as a coordination point for Mg(2+).

Belongs to the MobA family. Monomer. Requires Mg(2+) as cofactor.

It is found in the cytoplasm. It carries out the reaction Mo-molybdopterin + GTP + H(+) = Mo-molybdopterin guanine dinucleotide + diphosphate. In terms of biological role, transfers a GMP moiety from GTP to Mo-molybdopterin (Mo-MPT) cofactor (Moco or molybdenum cofactor) to form Mo-molybdopterin guanine dinucleotide (Mo-MGD) cofactor. The chain is Molybdenum cofactor guanylyltransferase from Ralstonia pickettii (strain 12J).